A 445-amino-acid polypeptide reads, in one-letter code: tRNA modification GTPase MnmE (445 aa).

3 residues coordinate (6S)-5-formyl-5,6,7,8-tetrahydrofolate: Arg-21, Glu-78, and Lys-117. The TrmE-type G domain maps to 213–370 (GFRIALVGAP…LKETLSERVV (158 aa)). GTP is bound by residues 223 to 228 (NAGKST), 242 to 248 (TATPGTT), and 267 to 270 (DTAG). Positions 227 and 248 each coordinate Mg(2+). Lys-445 is a (6S)-5-formyl-5,6,7,8-tetrahydrofolate binding site.

This sequence belongs to the TRAFAC class TrmE-Era-EngA-EngB-Septin-like GTPase superfamily. TrmE GTPase family. As to quaternary structure, homodimer. Heterotetramer of two MnmE and two MnmG subunits. Requires K(+) as cofactor.

It is found in the cytoplasm. In terms of biological role, exhibits a very high intrinsic GTPase hydrolysis rate. Involved in the addition of a carboxymethylaminomethyl (cmnm) group at the wobble position (U34) of certain tRNAs, forming tRNA-cmnm(5)s(2)U34. In Phenylobacterium zucineum (strain HLK1), this protein is tRNA modification GTPase MnmE.